The primary structure comprises 246 residues: NH(3)-dependent NAD(+) synthetase (246 aa).

Residue 29 to 36 (GLSGGIDS) participates in ATP binding. Residue aspartate 35 coordinates Mg(2+). Arginine 110 contacts deamido-NAD(+). Position 130 (threonine 130) interacts with ATP. Position 135 (glutamate 135) interacts with Mg(2+). Residues lysine 159 and serine 181 each coordinate ATP.

It belongs to the NAD synthetase family. In terms of assembly, homodimer.

It catalyses the reaction deamido-NAD(+) + NH4(+) + ATP = AMP + diphosphate + NAD(+) + H(+). It functions in the pathway cofactor biosynthesis; NAD(+) biosynthesis; NAD(+) from deamido-NAD(+) (ammonia route): step 1/1. In terms of biological role, catalyzes the ATP-dependent amidation of deamido-NAD to form NAD. Uses ammonia as a nitrogen source. The chain is NH(3)-dependent NAD(+) synthetase from Campylobacter jejuni subsp. jejuni serotype O:23/36 (strain 81-176).